Consider the following 175-residue polypeptide: Ribosome maturation factor RimM (175 aa).

In terms of domain architecture, PRC barrel spans 97-170 (NGQYYWTDVL…YLYVDWQMAW (74 aa)).

It belongs to the RimM family. Binds ribosomal protein uS19.

Its subcellular location is the cytoplasm. Functionally, an accessory protein needed during the final step in the assembly of 30S ribosomal subunit, possibly for assembly of the head region. Essential for efficient processing of 16S rRNA. May be needed both before and after RbfA during the maturation of 16S rRNA. It has affinity for free ribosomal 30S subunits but not for 70S ribosomes. This chain is Ribosome maturation factor RimM, found in Dichelobacter nodosus (strain VCS1703A).